The chain runs to 215 residues: FBD domain-containing protein At3g58975 (215 aa).

The FBD domain occupies 122 to 199 (RSLTSCPVKK…KLSSCNVQLL (78 aa)).

The polypeptide is FBD domain-containing protein At3g58975 (Arabidopsis thaliana (Mouse-ear cress)).